The sequence spans 245 residues: Glutathione S-transferase T1 (245 aa).

The GST N-terminal domain maps to 2 to 83 (MKLKVYADRM…YLSSAFPSVA (82 aa)). Glutathione contacts are provided by residues 12-13 (SQ), 41-42 (QL), 54-55 (KV), and 67-68 (ES). Positions 90 to 233 (DLSKRAKIHS…KEGFQKRREM (144 aa)) constitute a GST C-terminal domain. The short motif at 243 to 245 (SKI) is the Microbody targeting signal element.

This sequence belongs to the GST superfamily. Theta family.

It is found in the nucleus. It localises to the peroxisome. It catalyses the reaction RX + glutathione = an S-substituted glutathione + a halide anion + H(+). Its function is as follows. In vitro, possesses glutathione S-transferase activity toward 1-chloro-2,4-dinitrobenzene (CDNB) and p-nitrobenzyl chloride (pNBC), and glutathione peroxidase activity toward cumene hydroperoxide and linoleic acid-13-hydroperoxide. May be involved in the conjugation of reduced glutathione to a wide number of exogenous and endogenous hydrophobic electrophiles and have a detoxification role against certain herbicides. In Arabidopsis thaliana (Mouse-ear cress), this protein is Glutathione S-transferase T1 (GSTT1).